The primary structure comprises 463 residues: O-acetyltransferase SAT5 (463 aa).

The protein belongs to the trichothecene 3-O-acetyltransferase family.

It functions in the pathway mycotoxin biosynthesis. Functionally, O-acetyltransferase; part of the satratoxin SC1 cluster involved in the biosynthesis of satratoxins, trichothecene mycotoxins that are associated with human food poisonings. Satratoxins are suggested to be made by products of multiple gene clusters (SC1, SC2 and SC3) that encode 21 proteins in all, including polyketide synthases, acetyltransferases, and other enzymes expected to modify the trichothecene skeleton. SC1 encodes 10 proteins, SAT1 to SAT10. The largest are SAT8, which encodes a putative polyketide synthase (PKS) with a conventional non-reducing architecture, and SAT10, a putative protein containing four ankyrin repeats and thus may be involved in protein scaffolding. The putative short-chain reductase SAT3 may assist the PKS in some capacity. SAT6 contains a secretory lipase domain and acts probably as a trichothecene esterase. SAT5 encodes a putative acetyltransferase, and so, with SAT6, may affect endogenous protection from toxicity. The probable transcription factor SAT9 may regulate the expression of the SC1 cluster. SC2 encodes proteins SAT11 to SAT16, the largest of which encodes the putative reducing PKS SAT13. SAT11 is a cytochrome P450 monooxygenase, while SAT14 and SAT16 are probable acetyltransferases. The SC2 cluster may be regulated by the transcription factor SAT15. SC3 is a small cluster that encodes 5 proteins, SAT17 to SAT21. SAT21 is a putative MFS-type transporter which may have a role in exporting secondary metabolites. The four other proteins putatively encoded in SC3 include the taurine hydroxylase-like protein SAT17, the O-methyltransferase SAT18, the acetyltransferase SAT19, and the Cys6-type zinc finger SAT20, the latter being probably involved in regulation of SC3 expression. The chain is O-acetyltransferase SAT5 from Stachybotrys chartarum (strain CBS 109288 / IBT 7711) (Toxic black mold).